The sequence spans 209 residues: Imidazole glycerol phosphate synthase subunit HisH (209 aa).

Residues 5–209 (AIAIIDYDMG…LRNFVALVKD (205 aa)) form the Glutamine amidotransferase type-1 domain. The Nucleophile role is filled by C83. Residues H188 and E190 contribute to the active site.

Heterodimer of HisH and HisF.

It is found in the cytoplasm. The catalysed reaction is 5-[(5-phospho-1-deoxy-D-ribulos-1-ylimino)methylamino]-1-(5-phospho-beta-D-ribosyl)imidazole-4-carboxamide + L-glutamine = D-erythro-1-(imidazol-4-yl)glycerol 3-phosphate + 5-amino-1-(5-phospho-beta-D-ribosyl)imidazole-4-carboxamide + L-glutamate + H(+). It catalyses the reaction L-glutamine + H2O = L-glutamate + NH4(+). Its pathway is amino-acid biosynthesis; L-histidine biosynthesis; L-histidine from 5-phospho-alpha-D-ribose 1-diphosphate: step 5/9. IGPS catalyzes the conversion of PRFAR and glutamine to IGP, AICAR and glutamate. The HisH subunit catalyzes the hydrolysis of glutamine to glutamate and ammonia as part of the synthesis of IGP and AICAR. The resulting ammonia molecule is channeled to the active site of HisF. This is Imidazole glycerol phosphate synthase subunit HisH from Thermosynechococcus vestitus (strain NIES-2133 / IAM M-273 / BP-1).